The sequence spans 306 residues: Dihydroorotate dehydrogenase B (NAD(+)), catalytic subunit (306 aa).

FMN is bound by residues Ser-23 and 47–48; that span reads KS. Substrate is bound by residues Lys-47, 71–75, and Asn-130; that span reads NAMGL. An FMN-binding site is contributed by Asn-130. Cys-133 acts as the Nucleophile in catalysis. Lys-168 and Ile-194 together coordinate FMN. 195 to 196 is a substrate binding site; it reads NT. Residues Gly-220, 246-247, and 268-269 each bind FMN; these read GG and GS.

Belongs to the dihydroorotate dehydrogenase family. Type 1 subfamily. Heterotetramer of 2 PyrK and 2 PyrD type B subunits. The cofactor is FMN.

The protein resides in the cytoplasm. It carries out the reaction (S)-dihydroorotate + NAD(+) = orotate + NADH + H(+). It functions in the pathway pyrimidine metabolism; UMP biosynthesis via de novo pathway; orotate from (S)-dihydroorotate (NAD(+) route): step 1/1. Its function is as follows. Catalyzes the conversion of dihydroorotate to orotate with NAD(+) as electron acceptor. This chain is Dihydroorotate dehydrogenase B (NAD(+)), catalytic subunit (pyrD), found in Methanocaldococcus jannaschii (strain ATCC 43067 / DSM 2661 / JAL-1 / JCM 10045 / NBRC 100440) (Methanococcus jannaschii).